Here is a 183-residue protein sequence, read N- to C-terminus: Adenine phosphoribosyltransferase (183 aa).

It belongs to the purine/pyrimidine phosphoribosyltransferase family. In terms of assembly, homodimer.

The protein localises to the cytoplasm. It carries out the reaction AMP + diphosphate = 5-phospho-alpha-D-ribose 1-diphosphate + adenine. It participates in purine metabolism; AMP biosynthesis via salvage pathway; AMP from adenine: step 1/1. Its function is as follows. Catalyzes a salvage reaction resulting in the formation of AMP, that is energically less costly than de novo synthesis. In Corynebacterium kroppenstedtii (strain DSM 44385 / JCM 11950 / CIP 105744 / CCUG 35717), this protein is Adenine phosphoribosyltransferase.